A 379-amino-acid polypeptide reads, in one-letter code: Alanine racemase (379 aa).

The active-site Proton acceptor; specific for D-alanine is Lys37. N6-(pyridoxal phosphate)lysine is present on Lys37. Residue Arg139 coordinates substrate. Tyr266 functions as the Proton acceptor; specific for L-alanine in the catalytic mechanism. Met314 contacts substrate.

It belongs to the alanine racemase family. Pyridoxal 5'-phosphate serves as cofactor.

It carries out the reaction L-alanine = D-alanine. It functions in the pathway amino-acid biosynthesis; D-alanine biosynthesis; D-alanine from L-alanine: step 1/1. Catalyzes the interconversion of L-alanine and D-alanine. May also act on other amino acids. In Sorangium cellulosum (strain So ce56) (Polyangium cellulosum (strain So ce56)), this protein is Alanine racemase (alr).